A 51-amino-acid polypeptide reads, in one-letter code: Insulin (51 aa).

3 disulfide bridges follow: C8–C37, C20–C50, and C36–C41.

It belongs to the insulin family. Heterodimer of a B chain and an A chain linked by two disulfide bonds.

It localises to the secreted. Insulin decreases blood glucose concentration. It increases cell permeability to monosaccharides, amino acids and fatty acids. It accelerates glycolysis, the pentose phosphate cycle, and glycogen synthesis in liver. This is Insulin (ins) from Gadus morhua subsp. callarias (Baltic cod).